A 634-amino-acid chain; its full sequence is Probable potassium transport system protein Kup (634 aa).

Helical transmembrane passes span 21–41 (IILS…LYTL), 58–78 (VLGI…IKYV), 110–130 (IYIV…DGII), 148–168 (PHMK…LFLC), 180–200 (FGPI…YNII), 217–237 (FFLE…LAVT), 258–278 (WMYV…ALVL), 296–316 (GLYP…QALI), 348–368 (IYVP…VIGF), 377–397 (AYGV…IIYA), 408–428 (LLMI…ANII), and 432–452 (DGAW…RTWL).

Belongs to the HAK/KUP transporter (TC 2.A.72) family.

Its subcellular location is the cell inner membrane. The enzyme catalyses K(+)(in) + H(+)(in) = K(+)(out) + H(+)(out). Transport of potassium into the cell. Likely operates as a K(+):H(+) symporter. This is Probable potassium transport system protein Kup from Xylella fastidiosa (strain Temecula1 / ATCC 700964).